Reading from the N-terminus, the 201-residue chain is Small ribosomal subunit protein uS4c (201 aa).

The disordered stretch occupies residues 15-43 (LGALPGLTSKRPRSGSDLRNQSRSGKRSQ). One can recognise an S4 RNA-binding domain in the interval 89–150 (MRLDNILFRL…KERSRALIQN (62 aa)).

Belongs to the universal ribosomal protein uS4 family. As to quaternary structure, part of the 30S ribosomal subunit. Contacts protein S5. The interaction surface between S4 and S5 is involved in control of translational fidelity.

It is found in the plastid. The protein localises to the chloroplast. Functionally, one of the primary rRNA binding proteins, it binds directly to 16S rRNA where it nucleates assembly of the body of the 30S subunit. Its function is as follows. With S5 and S12 plays an important role in translational accuracy. The polypeptide is Small ribosomal subunit protein uS4c (rps4) (Amborella trichopoda).